The chain runs to 168 residues: Pleiotrophin (168 aa).

An N-terminal signal peptide occupies residues 1–32 (MQTPQFLQQRRKFAAAFLAFIFLLAVVDTAEA). 5 cysteine pairs are disulfide-bonded: Cys47/Cys76, Cys55/Cys85, Cys62/Cys89, Cys99/Cys131, and Cys109/Cys141. 2 chondroitin sulfate binding regions span residues 92-99 (KKQFGAEC) and 123-131 (KRALHNADC). The disordered stretch occupies residues 139 to 168 (KPCGKVTKPKPQAESKKKKKEGKKQEKMLD). The tract at residues 147-168 (PKPQAESKKKKKEGKKQEKMLD) is chondroitin sulfate A binding.

The protein belongs to the pleiotrophin family. In terms of assembly, interacts with ALK and NEK6. Interacts with PTPRZ1 (via chondroitin sulfate groups); promotes formation of homooligomers; oligomerization impairs tyrosine phosphatase activity. Forms a complex with PTPRZ1 and CTNNB1; this complex inactivates PTPRZ1 protein tyrosine phosphatase activity through PTN interaction and stimulates tyrosine phosphorylation of CTNNB1. Interacts with ITGB3 and ITGA5. Forms a complex with PTPRZ1 and integrin alpha-V/beta-3 (ITGAV:ITGB3) that stimulates endothelial cell migration through ITGB3 'Tyr-773' phosphorylation. Interacts with SDC3 (via heparan sulfate chains); this interaction mediates the neurite outgrowth-promoting signal from PTN to the cytoskeleton of growing neurites; this interaction mediates osteoblast recruitment. Interacts with GPC2 (via heparan sulfate); this interaction promotes neurite outgrowth through binding of PTN with chondroitin sulfate of proteoglycans, thereby releasing PTPRS of chondroitin sulfate proteoglycans (CSPGs) and leading to binding with heparan sulfate of GPC2. Phosphorylated by NEK6.

The protein resides in the secreted. Its function is as follows. Secreted growth factor that mediates its signal through cell-surface proteoglycan and non-proteoglycan receptors. Binds cell-surface proteoglycan receptor via their chondroitin sulfate (CS) groups. Thereby regulates many processes like cell proliferation, cell survival, cell growth, cell differentiation and cell migration in several tissues namely neuron and bone. Also plays a role in synaptic plasticity and learning-related behavior by inhibiting long-term synaptic potentiation. Binds PTPRZ1, leading to neutralization of the negative charges of the CS chains of PTPRZ1, inducing PTPRZ1 clustering, thereby causing the dimerization and inactivation of its phosphatase activity leading to increased tyrosine phosphorylation of each of the PTPRZ1 substrates like ALK, CTNNB1 or AFAP1L2 in order to activate the PI3K-AKT pathway. Through PTPRZ1 binding controls oligodendrocyte precursor cell differentiation by enhancing the phosphorylation of AFAP1L2 in order to activate the PI3K-AKT pathway. Forms a complex with PTPRZ1 and integrin alpha-V/beta-3 (ITGAV:ITGB3) that stimulates endothelial cell migration through SRC dephosphorylation and activation that consequently leads to ITGB3 'Tyr-773' phosphorylation. In adult hippocampus promotes dendritic arborization, spine development, and functional integration and connectivity of newborn granule neurons through ALK by activating AKT signaling pathway. Binds GPC2 and chondroitin sulfate proteoglycans (CSPGs) at the neuron surface, leading to abrogation of binding between PTPRS and CSPGs and neurite outgrowth promotion. Binds SDC3 and mediates bone formation by recruiting and attaching osteoblasts/osteoblast precursors to the sites for new bone deposition. Binds ALK and promotes cell survival and cell proliferation through MAPK pathway activation. Inhibits proliferation and enhances differentiation of neural stem cells by inhibiting FGF2-induced fibroblast growth factor receptor signaling pathway. Mediates regulatory mechanisms in normal hemostasis and in hematopoietic regeneration and in maintaining the balance of myeloid and lymphoid regeneration. In addition may play a role in the female reproductive system, auditory response and the progesterone-induced decidualization pathway. This Sus scrofa (Pig) protein is Pleiotrophin.